An 800-amino-acid chain; its full sequence is Phenylalanine--tRNA ligase beta subunit (800 aa).

In terms of domain architecture, tRNA-binding spans 39 to 154 (TKDIKNLVVG…ESQVPGTDAL (116 aa)). The B5 domain occupies 408 to 483 (AFITPIDITA…RIYGYDDIPS (76 aa)). Mg(2+)-binding residues include Asp-461, Asp-467, Glu-470, and Glu-471. Positions 708–800 (PRFPGMSRDI…ALIEQGAVIR (93 aa)) constitute an FDX-ACB domain.

This sequence belongs to the phenylalanyl-tRNA synthetase beta subunit family. Type 1 subfamily. In terms of assembly, tetramer of two alpha and two beta subunits. Mg(2+) is required as a cofactor.

It localises to the cytoplasm. The enzyme catalyses tRNA(Phe) + L-phenylalanine + ATP = L-phenylalanyl-tRNA(Phe) + AMP + diphosphate + H(+). The chain is Phenylalanine--tRNA ligase beta subunit from Staphylococcus aureus (strain MRSA252).